A 352-amino-acid chain; its full sequence is Probable tyrosine-protein kinase DDB_G0290471 (352 aa).

The region spanning 51 to 333 is the Protein kinase domain; sequence IEYVCRLGSG…ISLNQIRSFY (283 aa). ATP contacts are provided by residues 57–65 and Lys-78; that span reads LGSGSLCRV. The active-site Proton acceptor is Asp-175.

Belongs to the protein kinase superfamily. TKL Tyr protein kinase family.

It carries out the reaction L-tyrosyl-[protein] + ATP = O-phospho-L-tyrosyl-[protein] + ADP + H(+). This chain is Probable tyrosine-protein kinase DDB_G0290471, found in Dictyostelium discoideum (Social amoeba).